Reading from the N-terminus, the 387-residue chain is Succinate--CoA ligase [ADP-forming] subunit beta (387 aa).

The ATP-grasp domain occupies 9–243 (KEILSTYGIP…YSQLDPLEIT (235 aa)). ATP is bound by residues K45, 52–54 (GRG), E98, V101, and E106. 2 residues coordinate Mg(2+): N198 and D212. Residues N263 and 320–322 (GIM) each bind substrate.

It belongs to the succinate/malate CoA ligase beta subunit family. In terms of assembly, heterotetramer of two alpha and two beta subunits. Requires Mg(2+) as cofactor.

It carries out the reaction succinate + ATP + CoA = succinyl-CoA + ADP + phosphate. It catalyses the reaction GTP + succinate + CoA = succinyl-CoA + GDP + phosphate. It functions in the pathway carbohydrate metabolism; tricarboxylic acid cycle; succinate from succinyl-CoA (ligase route): step 1/1. Its function is as follows. Succinyl-CoA synthetase functions in the citric acid cycle (TCA), coupling the hydrolysis of succinyl-CoA to the synthesis of either ATP or GTP and thus represents the only step of substrate-level phosphorylation in the TCA. The beta subunit provides nucleotide specificity of the enzyme and binds the substrate succinate, while the binding sites for coenzyme A and phosphate are found in the alpha subunit. The protein is Succinate--CoA ligase [ADP-forming] subunit beta of Trichlorobacter lovleyi (strain ATCC BAA-1151 / DSM 17278 / SZ) (Geobacter lovleyi).